Consider the following 438-residue polypeptide: METVSLSLWNAPRAEAPVVATVALPGSKSITNRALILAALADGPSTLTGALRSRDTDLMIEALRTLGISIETVGADTTLRVTPGPLQGGAVDCGLAGTVMRFLPPVAALASGTVHFDGDEQARTRPLDTILDALRGLGADIDGASLPFTVRGAGSLRGGRVTIDASGSSQFVSGLLLSAAAFDEGVTVHHDGKTVPSMPHIDMTVEMLRESGVEVTTPATGGEADTWRVSPGVVRAVDRAIEPDLSNATAFLAAAAVTGGEVTVPLWPSRTTQPGDAIREILLAMGADVRLDGANLTVRGPQQLTGIDIDLHDVGELTPTVAALAALADGPSHLRGIAHLRGHETDRLAALAHEINSLGGNVTETEDGLTIVPAGLHGGTWRSYADHRMATAGAIVGLRVDGIRIEDVGTTAKTLPGFENLWATMLSAAAGTERKASF.

The 3-phosphoshikimate site is built by K28, S29, and R33. K28 is a binding site for phosphoenolpyruvate. Residues G97 and R125 each coordinate phosphoenolpyruvate. 3-phosphoshikimate is bound by residues S168, S169, Q170, E316, and H343. Position 170 (Q170) interacts with phosphoenolpyruvate. Residue E316 is the Proton acceptor of the active site. 3 residues coordinate phosphoenolpyruvate: R347, R388, and K413.

It belongs to the EPSP synthase family. In terms of assembly, monomer.

The protein resides in the cytoplasm. The catalysed reaction is 3-phosphoshikimate + phosphoenolpyruvate = 5-O-(1-carboxyvinyl)-3-phosphoshikimate + phosphate. It participates in metabolic intermediate biosynthesis; chorismate biosynthesis; chorismate from D-erythrose 4-phosphate and phosphoenolpyruvate: step 6/7. In terms of biological role, catalyzes the transfer of the enolpyruvyl moiety of phosphoenolpyruvate (PEP) to the 5-hydroxyl of shikimate-3-phosphate (S3P) to produce enolpyruvyl shikimate-3-phosphate and inorganic phosphate. The protein is 3-phosphoshikimate 1-carboxyvinyltransferase of Rhodococcus jostii (strain RHA1).